The following is a 506-amino-acid chain: Pentatricopeptide repeat-containing protein At5g18475 (506 aa).

The tract at residues 28 to 48 (SEKKKKPSPPPESSISPVETN) is disordered. PPR repeat units lie at residues 88–122 (NNATYSVLLDNLVRHKKFLAVDAILHQMKYETCRF), 123–158 (QESLFLNLMRHFSRSDLHDKVMEMFNLIQVIARVKP), 159–194 (SLNAISTCLNLLIDSGEVNLSRKLLLYAKHNLGLQP), 195–229 (NTCIFNILVKHHCKNGDINFAFLVVEEMKRSGISY), 231–266 (NSITYSTLMDCLFAHSRSKEAVELFEDMISKEGISP), 267–301 (DPVTFNVMINGFCRAGEVERAKKILDFMKKNGCNP), 302–336 (NVYNYSALMNGFCKVGKIQEAKQTFDEVKKTGLKL), 337–371 (DTVGYTTLMNCFCRNGETDEAMKLLGEMKASRCRA), 372–406 (DTLTYNVILRGLSSEGRSEEALQMLDQWGSEGVHL), 407–441 (NKGSYRIILNALCCNGELEKAVKFLSVMSERGIWP), 442–476 (HHATWNELVVRLCESGYTEIGVRVLIGFLRIGLIP), and 477–506 (GPKSWGAVVESICKERKLVHVFELLDSLVS).

This sequence belongs to the PPR family. P subfamily.

The polypeptide is Pentatricopeptide repeat-containing protein At5g18475 (Arabidopsis thaliana (Mouse-ear cress)).